Reading from the N-terminus, the 483-residue chain is MGFTLAIVGRPNVGKSTLFNRLVGRKLALVDDLPGVTRDRRIHDAKLYDLKFQVIDTAGLEEAANDSLEARMRAQTEAAISEADAVLFVIDAKAGITPADSTFAEAVRRSGKPVVLVANKAEARGSEAGMYDAFQLGLGEPCPISAKHGQGMPDLRDAIVELLGEERVFAEERQEEAADEVFTPAAVGALVGDDIEDPDAEEIPAYDATKPLRIAIVGRPNAGKSTLINTMLGEDRLLTGPEAGITRDSISADWEWHGRKIKLFDTAGMRRKARVQEKLEKLSVADGLRAIRFAEVVIIVLDATIPFEKQDLQIADLIIREGRAPVIAFNKWDLIEDRQMVLADLYEKTARLLPQVRGLRAVPISGERGQGIDKLMENVVKTHEIWNRRISTGRLNRWLEGVIAHQPPPAVSGRRLKVKYMTQVKTRPPGFVVSCSRPNAMPQSYVRYFINGLRETFDMPGVPIRLSLRTSDNPFAGRAKKKK.

EngA-type G domains are found at residues 3-167 (FTLA…GEER) and 212-387 (LRIA…EIWN). Residues 9–16 (GRPNVGKS), 56–60 (DTAGL), 119–122 (NKAE), 218–225 (GRPNAGKS), 265–269 (DTAGM), and 330–333 (NKWD) each bind GTP. Positions 388–472 (RRISTGRLNR…PIRLSLRTSD (85 aa)) constitute a KH-like domain.

The protein belongs to the TRAFAC class TrmE-Era-EngA-EngB-Septin-like GTPase superfamily. EngA (Der) GTPase family. In terms of assembly, associates with the 50S ribosomal subunit.

Functionally, GTPase that plays an essential role in the late steps of ribosome biogenesis. The polypeptide is GTPase Der (Brucella ovis (strain ATCC 25840 / 63/290 / NCTC 10512)).